We begin with the raw amino-acid sequence, 196 residues long: Proteasome subunit beta 2 (196 aa).

The propeptide at 1–6 (MEELPS) is removed in mature form; by autocatalysis. Thr-7 acts as the Nucleophile in catalysis.

Belongs to the peptidase T1B family. The 20S proteasome core is composed of 14 alpha and 14 beta subunits that assemble into four stacked heptameric rings, resulting in a barrel-shaped structure. The two inner rings, each composed of seven catalytic beta subunits, are sandwiched by two outer rings, each composed of seven alpha subunits. The catalytic chamber with the active sites is on the inside of the barrel. Has a gated structure, the ends of the cylinder being occluded by the N-termini of the alpha-subunits. Is capped at one or both ends by the proteasome regulatory ATPase, PAN.

Its subcellular location is the cytoplasm. The enzyme catalyses Cleavage of peptide bonds with very broad specificity.. Its activity is regulated as follows. The formation of the proteasomal ATPase PAN-20S proteasome complex, via the docking of the C-termini of PAN into the intersubunit pockets in the alpha-rings, triggers opening of the gate for substrate entry. Interconversion between the open-gate and close-gate conformations leads to a dynamic regulation of the 20S proteasome proteolysis activity. Its function is as follows. Component of the proteasome core, a large protease complex with broad specificity involved in protein degradation. The polypeptide is Proteasome subunit beta 2 (Metallosphaera sedula (strain ATCC 51363 / DSM 5348 / JCM 9185 / NBRC 15509 / TH2)).